A 1004-amino-acid polypeptide reads, in one-letter code: Bifunctional glutamine synthetase adenylyltransferase/adenylyl-removing enzyme (1004 aa).

The tract at residues 1 to 496 is adenylyl removase; sequence MVRPPSARSA…LHAKLFYRPL (496 aa). The segment at 502–1004 is adenylyl transferase; it reads RMDPDALRLS…RAVVERVFGS (503 aa).

It belongs to the GlnE family. It depends on Mg(2+) as a cofactor.

The catalysed reaction is [glutamine synthetase]-O(4)-(5'-adenylyl)-L-tyrosine + phosphate = [glutamine synthetase]-L-tyrosine + ADP. It carries out the reaction [glutamine synthetase]-L-tyrosine + ATP = [glutamine synthetase]-O(4)-(5'-adenylyl)-L-tyrosine + diphosphate. Involved in the regulation of glutamine synthetase GlnA, a key enzyme in the process to assimilate ammonia. When cellular nitrogen levels are high, the C-terminal adenylyl transferase (AT) inactivates GlnA by covalent transfer of an adenylyl group from ATP to specific tyrosine residue of GlnA, thus reducing its activity. Conversely, when nitrogen levels are low, the N-terminal adenylyl removase (AR) activates GlnA by removing the adenylyl group by phosphorolysis, increasing its activity. The regulatory region of GlnE binds the signal transduction protein PII (GlnB) which indicates the nitrogen status of the cell. This chain is Bifunctional glutamine synthetase adenylyltransferase/adenylyl-removing enzyme, found in Nocardia farcinica (strain IFM 10152).